A 299-amino-acid polypeptide reads, in one-letter code: Acetaldehyde dehydrogenase 6 (299 aa).

Cys125 (acyl-thioester intermediate) is an active-site residue. NAD(+)-binding positions include 156-164 and Asn275; that span reads GAGPGTRAN.

Belongs to the acetaldehyde dehydrogenase family.

The catalysed reaction is acetaldehyde + NAD(+) + CoA = acetyl-CoA + NADH + H(+). This Rhodococcus jostii (strain RHA1) protein is Acetaldehyde dehydrogenase 6 (hpdG).